Reading from the N-terminus, the 328-residue chain is Malate dehydrogenase (328 aa).

11-17 contributes to the NAD(+) binding site; it reads GAAGQIG. Substrate-binding residues include R94 and R100. Residues N107, Q114, and 131–133 contribute to the NAD(+) site; that span reads VGN. The substrate site is built by N133 and R164. H189 acts as the Proton acceptor in catalysis.

It belongs to the LDH/MDH superfamily. MDH type 2 family.

It catalyses the reaction (S)-malate + NAD(+) = oxaloacetate + NADH + H(+). In terms of biological role, catalyzes the reversible oxidation of malate to oxaloacetate. This is Malate dehydrogenase from Xanthomonas campestris pv. campestris (strain 8004).